We begin with the raw amino-acid sequence, 481 residues long: Glutamate mutase epsilon subunit (481 aa).

Arginine 67 lines the L-glutamate pocket. Glycine 69 lines the adenosylcob(III)alamin pocket. Arginine 99 serves as a coordination point for L-glutamate. Adenosylcob(III)alamin is bound at residue asparagine 122. L-glutamate-binding positions include 148-149, glutamate 170, and tyrosine 176; that span reads RH. Residue proline 179 participates in adenosylcob(III)alamin binding. Tyrosine 180 lines the L-glutamate pocket. The adenosylcob(III)alamin site is built by phenylalanine 296, lysine 325, glutamate 329, and isoleucine 333.

This sequence belongs to the methylaspartate mutase GlmE subunit family. Heterotetramer composed of 2 epsilon subunits (GlmE) and 2 sigma subunits (GlmS). GlmE exists as a homodimer and GlmS as a monomer. It depends on adenosylcob(III)alamin as a cofactor.

It carries out the reaction (2S,3S)-3-methyl-L-aspartate = L-glutamate. The protein operates within amino-acid degradation; L-glutamate degradation via mesaconate pathway; acetate and pyruvate from L-glutamate: step 1/4. In terms of biological role, catalyzes the carbon skeleton rearrangement of L-glutamate to L-threo-3-methylaspartate ((2S,3S)-3-methylaspartate). The chain is Glutamate mutase epsilon subunit from Yersinia enterocolitica serotype O:8 / biotype 1B (strain NCTC 13174 / 8081).